The following is a 196-amino-acid chain: SAGA-associated factor 11 homolog (196 aa).

The disordered stretch occupies residues 1 to 22; the sequence is MSAANMPTTTGAQGSGNQVPTT. An SGF11-type zinc finger spans residues 106 to 127; that stretch reads CTCPNCDRLVAAARFAPHLEKC. The interval 144-196 is disordered; the sequence is TKEGATSAHLHSAGNTGGTDDEDDVDWSSDKRRKKSNQNSRNNGSKKNNGKSF. Residue Ser172 is modified to Phosphoserine. A compositionally biased stretch (low complexity) spans 180-196; the sequence is NQNSRNNGSKKNNGKSF.

Belongs to the SGF11 family. In terms of assembly, component of some SAGA transcription coactivator-HAT complexes, at least composed of Ada2b, not/nonstop, Pcaf/Gcn5, Sgf11 and Spt3. Within the SAGA complex, Sgf11, e(y)2, and not/nonstop form an additional subcomplex of SAGA called the DUB module (deubiquitination module). Interacts directly with not/nonstop. Interacts with the AMEX complex component xmas-2. Interacts with Cbp80; important for promoter recruitment of Sgf11 that is not associated with the DUB module.

The protein localises to the nucleus. It is found in the nucleoplasm. The protein resides in the cytoplasm. Its function is as follows. Component of the transcription regulatory histone acetylation (HAT) complex SAGA, a multiprotein complex that activates transcription by remodeling chromatin and mediating histone acetylation and deubiquitination. Within the SAGA complex, participates in a subcomplex that specifically deubiquitinates histone H2B. The SAGA complex is recruited to specific gene promoters by activators, where it is required for transcription. Required for nuclear receptor-mediated transactivation. Binds independently on SAGA to promoters in an RNA-dependent manner. Binds to mRNA and is essential for total mRNA export from the nucleus. Required to counteract heterochromatin silencing. Controls the development of neuronal connectivity in visual system by being required for accurate axon targeting in the optic lobe. Required for expression of ecdysone-induced genes such as br/broad. The polypeptide is SAGA-associated factor 11 homolog (Drosophila erecta (Fruit fly)).